We begin with the raw amino-acid sequence, 235 residues long: Succinate dehydrogenase iron-sulfur subunit (235 aa).

The [2Fe-2S] cluster site is built by Cys-53, Cys-58, and Cys-73. Residues 133–163 (ERAKLDGLYECILCACCSSSCPSYWWNPDKF) form the 4Fe-4S ferredoxin-type domain. [4Fe-4S] cluster-binding residues include Cys-143, Cys-146, and Cys-149. Cys-153 serves as a coordination point for [3Fe-4S] cluster. An a ubiquinone-binding site is contributed by Trp-158. [3Fe-4S] cluster is bound by residues Cys-200 and Cys-206. Residue Cys-210 participates in [4Fe-4S] cluster binding.

This sequence belongs to the succinate dehydrogenase/fumarate reductase iron-sulfur protein family. In terms of assembly, part of an enzyme complex containing four subunits: a flavoprotein, an iron-sulfur protein, cytochrome b-556 and a hydrophobic protein. The cofactor is [2Fe-2S] cluster. It depends on [3Fe-4S] cluster as a cofactor. Requires [4Fe-4S] cluster as cofactor.

It catalyses the reaction a quinone + succinate = fumarate + a quinol. It participates in carbohydrate metabolism; tricarboxylic acid cycle; fumarate from succinate (bacterial route): step 1/1. In Coxiella burnetii (strain RSA 493 / Nine Mile phase I), this protein is Succinate dehydrogenase iron-sulfur subunit (sdhB).